We begin with the raw amino-acid sequence, 484 residues long: Glutamate--tRNA ligase (484 aa).

The 'HIGH' region motif lies at 11–21 (PSPTGYLHIGN). The short motif at 252–256 (KLSKR) is the 'KMSKS' region element. ATP is bound at residue lysine 255.

This sequence belongs to the class-I aminoacyl-tRNA synthetase family. Glutamate--tRNA ligase type 1 subfamily. As to quaternary structure, monomer.

The protein resides in the cytoplasm. The enzyme catalyses tRNA(Glu) + L-glutamate + ATP = L-glutamyl-tRNA(Glu) + AMP + diphosphate. Its function is as follows. Catalyzes the attachment of glutamate to tRNA(Glu) in a two-step reaction: glutamate is first activated by ATP to form Glu-AMP and then transferred to the acceptor end of tRNA(Glu). The chain is Glutamate--tRNA ligase from Staphylococcus epidermidis (strain ATCC 35984 / DSM 28319 / BCRC 17069 / CCUG 31568 / BM 3577 / RP62A).